Consider the following 939-residue polypeptide: MTERTGKDARAPHVAGGAPSPAPAAEPESRRRDGGRLRASQTSDAPRVAAAAAAAAAAASAAPSAPSDRLLFSRRGQGADPGGKAQDAQPRPDVARADPRLEAASGAGADSPGPPRQDRGPLHGAPSTALRPAGPGQGRSSPAWEPRSPRCPSGPEPPEDPRGARSSQGAACPLMSRPEGKAGDGCGTAGAHKGPPRGLSPSRQPLPLCPGAHAWPGAAGKAATQPAALGVEDEGGFAAEGSPGPLLKGKPRPPAGPAAAAGAAPAAPGTAPGGTAPVPKEDSRLPAPKGSLAEQDAPAPGCSPLATTMMDFIHVPILPLGSAFLAARTRQLLEAETYDAGAFAPPRGSPSAPCAPLAAGDFPDCAYPSDAEPKDDAFPLYGDFQPPALKIKEEEEGAEAAARSPRPYLAAGPHSCVFADAPPALPALPPLPPRAPSSRPGEGAPAAAAAAGCSASSASSPGPALECVLYKAEGAPPPQGPFAAAPCRVPGAGACLLPRDGAAAAASAGAAGASPALYQPLGLGALPQLGYQAAVLKEGLPQVYQPYLNYLRPDSDASQSPQYSFESLPQKICLICGDEASGCHYGVLTCGSCKVFFKRAMEGQHNYLCAGRNDCIVDKIRRKNCPACRLRKCCQAGMVLGGRKFKKFNKVRVMRTLDAVALPQPVGIPNESQALSQRISFSPSQDIQLIPPLINLLMSIEPDVIYAGHDNTKPDTSSSLLTSLNQLGERQLLSVVKWSKSLPGFRNLHIDDQITLIQYSWMSLMVFGLGWRSYKHVSGQMLYFAPDLILNEQRMKESSFYSLCLTMWQIPQEFVKLQVSQEEFLCMKVLLLLNTIPLEGLRSQNQFEEMRSSYIRELIKAIGLRQKGVVSSSQRFYQLTKLLDNLHDLVKQLHLYCLNTFIQSRALSVEFPEMMSEVIAAQLPKILAGMVKPLLFHKK.

Positions 1–11 (MTERTGKDARA) are enriched in basic and acidic residues. Residues 1–174 (MTERTGKDAR…RSSQGAACPL (174 aa)) form an AF3; mediates transcriptional activation (in isoform B) region. Residues 1 to 302 (MTERTGKDAR…AEQDAPAPGC (302 aa)) form a disordered region. The modulating, Ala/Pro-rich stretch occupies residues 1 to 572 (MTERTGKDAR…YSFESLPQKI (572 aa)). Residue Lys7 forms a Glycyl lysine isopeptide (Lys-Gly) (interchain with G-Cter in SUMO) linkage. Residues 15 to 26 (AGGAPSPAPAAE) show a composition bias toward low complexity. At Ser20 the chain carries Phosphoserine. Residues 27–36 (PESRRRDGGR) are compositionally biased toward basic and acidic residues. The span at 49–67 (AAAAAAAAAAASAAPSAPS) shows a compositional bias: low complexity. Position 141 is a phosphoserine (Ser141). Residues 175 to 314 (MSRPEGKAGD…LATTMMDFIH (140 aa)) form a mediates transcriptional transrepression (in isoform A) region. Residues 193 to 197 (KGPPR) carry the Nuclear localization signal motif. Ser200 is modified (phosphoserine). 2 stretches are compositionally biased toward low complexity: residues 211–230 (GAHA…AALG) and 257–278 (PAAA…TAPV). Ser303 is modified (phosphoserine; by MAPK1). The residue at position 349 (Ser349) is a Phosphoserine; by MAPK. Lys392 is covalently cross-linked (Glycyl lysine isopeptide (Lys-Gly) (interchain with G-Cter in SUMO); alternate). Residue Lys392 forms a Glycyl lysine isopeptide (Lys-Gly) (interchain with G-Cter in ubiquitin); alternate linkage. Ser404 carries the phosphoserine; by CDK2 modification. Residues 463-552 (PALECVLYKA…VYQPYLNYLR (90 aa)) are AF1; mediates transcriptional activation. A Glycyl lysine isopeptide (Lys-Gly) (interchain with G-Cter in SUMO) cross-link involves residue Lys537. 2 NR C4-type zinc fingers span residues 573 to 593 (CLIC…CGSC) and 609 to 633 (CAGR…LRKC). The segment at residues 573 to 645 (CLICGDEASG…AGMVLGGRKF (73 aa)) is a DNA-binding region (nuclear receptor). Position 682 is a phosphoserine (Ser682). Residues 685-919 (QDIQLIPPLI…EFPEMMSEVI (235 aa)) form the NR LBD domain. Positions 693 to 939 (LINLLMSIEP…MVKPLLFHKK (247 aa)) are AF2; mediates transcriptional activation.

This sequence belongs to the nuclear hormone receptor family. NR3 subfamily. In terms of assembly, interacts with SMARD1 and UNC45A. Interacts with CUEDC2; the interaction promotes ubiquitination, decreases sumoylation, and represses transcriptional activity. Interacts with PIAS3; the interaction promotes sumoylation of PR in a hormone-dependent manner, inhibits DNA-binding, and alters nuclear export. Interacts with SP1; the interaction requires ligand-induced phosphorylation on Ser-349 by ERK1/2-MAPK. Interacts with PRMT2. Isoform A interacts with NCOR2. Isoform B (but not isoform A) interacts with NCOA2 and NCOA1. Isoform B (but not isoform A) interacts with KLF9. Interacts with GTF2B. Post-translationally, phosphorylated on multiple serine sites. Several of these sites are hormone-dependent. Phosphorylation on Ser-303 occurs preferentially on isoform B, is highly hormone-dependent and modulates ubiquitination and sumoylation on Lys-392. Phosphorylation on Ser-303 and Ser-349 also requires induction by hormone. Basal phosphorylation on Ser-200 and Ser-404 is increased in response to progesterone and can be phosphorylated in vitro by the CDK2-A1 complex. Increased levels of phosphorylation on Ser-404 also in the presence of EGF, heregulin, IGF, PMA and FBS. Phosphorylation at this site by CDK2 is ligand-independent, and increases nuclear translocation and transcriptional activity. Phosphorylation at Ser-303, but not at Ser-200, is impaired during the G(2)/M phase of the cell cycle. Phosphorylation on Ser-349 by ERK1/2 MAPK is required for interaction with SP1. In terms of processing, sumoylation is hormone-dependent and represses transcriptional activity. Sumoylation on all three sites is enhanced by PIAS3. Desumoylated by SENP1. Sumoylation on Lys-392, the main site of sumoylation, is repressed by ubiquitination on the same site, and modulated by phosphorylation at Ser-303. Ubiquitination is hormone-dependent and represses sumoylation on the same site. Promoted by MAPK-mediated phosphorylation on Ser-303. Post-translationally, palmitoylated by ZDHHC7 and ZDHHC21. Palmitoylation is required for plasma membrane targeting and for rapid intracellular signaling via ERK and AKT kinases and cAMP generation. As to expression, expressed in mammary gland and uterus.

The protein resides in the nucleus. It is found in the cytoplasm. Functionally, the steroid hormones and their receptors are involved in the regulation of eukaryotic gene expression and affect cellular proliferation and differentiation in target tissues. Depending on the isoform, progesterone receptor functions as a transcriptional activator or repressor. Ligand-dependent transdominant repressor of steroid hormone receptor transcriptional activity including repression of its isoform B, MR and ER. Transrepressional activity may involve recruitment of corepressor NCOR2. Its function is as follows. Transcriptional activator of several progesteron-dependent promoters in a variety of cell types. Involved in activation of SRC-dependent MAPK signaling on hormone stimulation. This chain is Progesterone receptor (PGR), found in Canis lupus familiaris (Dog).